A 453-amino-acid polypeptide reads, in one-letter code: UDP-N-acetylmuramate--L-alanine ligase (453 aa).

Residue 112–118 (GTHGKTT) coordinates ATP.

Belongs to the MurCDEF family.

It localises to the cytoplasm. It catalyses the reaction UDP-N-acetyl-alpha-D-muramate + L-alanine + ATP = UDP-N-acetyl-alpha-D-muramoyl-L-alanine + ADP + phosphate + H(+). Its pathway is cell wall biogenesis; peptidoglycan biosynthesis. In terms of biological role, cell wall formation. The sequence is that of UDP-N-acetylmuramate--L-alanine ligase from Bdellovibrio bacteriovorus (strain ATCC 15356 / DSM 50701 / NCIMB 9529 / HD100).